A 49-amino-acid polypeptide reads, in one-letter code: Small, acid-soluble spore protein O (49 aa).

Positions 1–49 (MGKRKANHTISGMNAASAQGQGTGYNEEFANEPFTPAERQNNKKRKKNQ) are disordered. Over residues 8 to 20 (HTISGMNAASAQG) the composition is skewed to polar residues.

Belongs to the SspO family.

The protein resides in the spore core. This is Small, acid-soluble spore protein O from Bacillus cereus (strain ATCC 14579 / DSM 31 / CCUG 7414 / JCM 2152 / NBRC 15305 / NCIMB 9373 / NCTC 2599 / NRRL B-3711).